The following is an 806-amino-acid chain: Acetyl-CoA decarbonylase/synthase complex subunit alpha 1 (806 aa).

[4Fe-4S] cluster-binding residues include Cys-73, Cys-76, Cys-77, Cys-79, Cys-84, and Cys-94. His-117 is a CO binding site. [Ni-4Fe-4S] cluster is bound by residues His-250, Cys-278, and Cys-323. 4Fe-4S ferredoxin-type domains are found at residues Ser-406–Ala-436 and Phe-445–Ile-475. Residues Cys-417, Cys-420, Cys-423, Cys-427, Cys-455, Cys-458, Cys-461, and Cys-465 each contribute to the [4Fe-4S] cluster site. [Ni-4Fe-4S] cluster-binding residues include Cys-523, Cys-552, and Cys-587.

This sequence belongs to the Ni-containing carbon monoxide dehydrogenase family. In terms of assembly, heterotetramer of two alpha and two epsilon subunits. The ACDS complex is made up of alpha, epsilon, beta, gamma and delta subunits with a probable stoichiometry of (alpha(2)epsilon(2))(4)-beta(8)-(gamma(1)delta(1))(8). Requires [4Fe-4S] cluster as cofactor. It depends on [Ni-4Fe-4S] cluster as a cofactor.

It carries out the reaction CO + 2 oxidized [2Fe-2S]-[ferredoxin] + H2O = 2 reduced [2Fe-2S]-[ferredoxin] + CO2 + 2 H(+). Its pathway is one-carbon metabolism; methanogenesis from acetate. Its function is as follows. Part of the ACDS complex that catalyzes the reversible cleavage of acetyl-CoA, allowing growth on acetate as sole source of carbon and energy. The alpha-epsilon subcomponent functions as a carbon monoxide dehydrogenase. This is Acetyl-CoA decarbonylase/synthase complex subunit alpha 1 from Methanosarcina mazei (strain ATCC BAA-159 / DSM 3647 / Goe1 / Go1 / JCM 11833 / OCM 88) (Methanosarcina frisia).